We begin with the raw amino-acid sequence, 460 residues long: Monocarboxylate transporter 12 (460 aa).

Over Met1–Lys10 the chain is Cytoplasmic. Helical transmembrane passes span Thr11–Cys31, Ala58–Val78, Val86–Thr106, Leu115–Gly135, Ile148–Ile168, Leu177–Ile197, Phe246–Tyr266, Ala282–Val302, Phe329–Phe349, Val354–Leu374, Val376–Val396, and Phe406–Ile426. Residues Asn427 to Ser460 lie on the Cytoplasmic side of the membrane.

It belongs to the major facilitator superfamily. Monocarboxylate porter (TC 2.A.1.13) family.

It localises to the cell membrane. The protein resides in the basolateral cell membrane. The enzyme catalyses creatine(in) = creatine(out). It carries out the reaction guanidinoacetate(in) = guanidinoacetate(out). Its function is as follows. Functions as a transporter for creatine and as well for its precursor guanidinoacetate. Transport of creatine and GAA is independent of resting membrane potential and extracellular Na(+), Cl(-), or pH. Contributes to the process of creatine biosynthesis and distribution. The chain is Monocarboxylate transporter 12 (slc16a12) from Xenopus laevis (African clawed frog).